The chain runs to 60 residues: Large ribosomal subunit protein bL32 (60 aa).

The tract at residues 1-23 (MAVPKRKKSKSRRNMHRSHHAIK) is disordered.

It belongs to the bacterial ribosomal protein bL32 family.

This Wolbachia pipientis subsp. Culex pipiens (strain wPip) protein is Large ribosomal subunit protein bL32.